A 421-amino-acid chain; its full sequence is Nuclear envelope integral membrane protein 2 (421 aa).

The N-terminal stretch at 1 to 22 (MLPRLWWLVLWLQPLATLPASA) is a signal peptide. The next 6 membrane-spanning stretches (helical) occupy residues 64 to 84 (YMWSTVQVTVTSPGLLNIVYI), 147 to 167 (NIVDFKLFLVFVTGIFLFLYA), 175 to 195 (VFYYSSGTVLGILMTLVFVLL), 206 to 226 (TFGALMIGCWFASVYVLCQLM), 238 to 258 (MYILGYVVVVGLCSFAACYSH), and 281 to 301 (LVYTGVAAPQFAYAVLIVLLF).

The protein belongs to the NEMP family. As to expression, in the ovary, highly expressed in somatic cells.

It is found in the nucleus inner membrane. This chain is Nuclear envelope integral membrane protein 2 (Nemp2), found in Mus musculus (Mouse).